The primary structure comprises 535 residues: Alpha-1,3-mannosyl-glycoprotein 4-beta-N-acetylglucosaminyltransferase A (535 aa).

Over 1 to 4 (MRLR) the chain is Cytoplasmic. Residues 5-27 (NGTVATALAFITSFLTLSWYTTW) traverse the membrane as a helical; Signal-anchor for type II membrane protein segment. Residues 28-63 (QNGKEKLIAYQREFLALKERLRIAEHRISQRSSELN) adopt a coiled-coil conformation. Topologically, residues 28 to 535 (QNGKEKLIAY…NEIHIKKATK (508 aa)) are lumenal. 2 N-linked (GlcNAc...) asparagine glycosylation sites follow: asparagine 77 and asparagine 458. Serine 474 carries the phosphoserine modification.

This sequence belongs to the glycosyltransferase 54 family. A divalent metal cation is required as a cofactor. N-glycosylated.

Its subcellular location is the golgi apparatus membrane. The protein localises to the secreted. It catalyses the reaction N(4)-{beta-D-GlcNAc-(1-&gt;2)-alpha-D-Man-(1-&gt;3)-[beta-D-GlcNAc-(1-&gt;2)-alpha-D-Man-(1-&gt;6)]-beta-D-Man-(1-&gt;4)-beta-D-GlcNAc-(1-&gt;4)-beta-D-GlcNAc}-L-asparaginyl-[protein] + UDP-N-acetyl-alpha-D-glucosamine = N(4)-{beta-D-GlcNAc-(1-&gt;2)-[beta-D-GlcNAc-(1-&gt;4)]-alpha-D-Man-(1-&gt;3)-[beta-D-GlcNAc-(1-&gt;2)-alpha-D-Man-(1-&gt;6)]-beta-D-Man-(1-&gt;4)-beta-D-GlcNAc-(1-&gt;4)-beta-D-GlcNAc}-L-asparaginyl-[protein] + UDP + H(+). It carries out the reaction an N(4)-{beta-D-GlcNAc-(1-&gt;2)-alpha-D-Man-(1-&gt;3)-[alpha-D-Man-(1-&gt;6)]-beta-D-Man-(1-&gt;4)-beta-D-GlcNAc-(1-&gt;4)-beta-D-GlcNAc}-L-asparaginyl-[protein] + UDP-N-acetyl-alpha-D-glucosamine = an N(4)-{beta-D-GlcNAc-(1-&gt;2)-[beta-D-GlcNAc-(1-&gt;4)]-alpha-D-Man-(1-&gt;3)-[alpha-D-Man-(1-&gt;6)]-beta-D-Man-(1-&gt;4)-beta-D-GlcNAc-(1-&gt;4)-beta-D-GlcNAc}-L-asparaginyl-[protein] + UDP + H(+). The catalysed reaction is an N(4)-{beta-D-GlcNAc-(1-&gt;2)-alpha-D-Man-(1-&gt;3)-[beta-D-GlcNAc-(1-&gt;2)-[beta-D-GlcNAc-(1-&gt;6)]-alpha-D-Man-(1-&gt;6)]-beta-D-Man-(1-&gt;4)-beta-D-GlcNAc-(1-&gt;4)-beta-D-GlcNAc}-L-asparaginyl-[protein] + UDP-N-acetyl-alpha-D-glucosamine = an N(4)-{beta-D-GlcNAc-(1-&gt;2)-[beta-D-GlcNAc-(1-&gt;4)]-alpha-D-Man-(1-&gt;3)-[beta-D-GlcNAc-(1-&gt;2)-[beta-D-GlcNAc-(1-&gt;6)]-alpha-D-Man-(1-&gt;6)]-beta-D-Man-(1-&gt;4)-beta-D-GlcNAc-(1-&gt;4)-beta-D-GlcNAc}-L-asparaginyl-[protein] + UDP + H(+). The enzyme catalyses an N(4)-{beta-D-GlcNAc-(1-&gt;2)-alpha-D-Man-(1-&gt;3)-[beta-D-GlcNAc-(1-&gt;2)-alpha-D-Man-(1-&gt;6)]-beta-D-Man-(1-&gt;4)-beta-D-GlcNAc-(1-&gt;4)-[alpha-L-Fuc-(1-&gt;6)]-beta-D-GlcNAc}-L-asparaginyl-[protein] + UDP-N-acetyl-alpha-D-glucosamine = N(4)-{beta-D-GlcNAc-(1-&gt;2)-[beta-D-GlcNAc-(1-&gt;4)]-alpha-D-Man-(1-&gt;3)-[beta-D-GlcNAc-(1-&gt;2)-alpha-D-Man-(1-&gt;6)]-beta-D-Man-(1-&gt;4)-beta-D-GlcNAc-(1-&gt;4)-[alpha-L-Fuc-(1-&gt;6)]-beta-D-GlcNAc}-asparaginyl-[protein] + UDP + H(+). It catalyses the reaction an N(4)-{beta-D-GlcNAc-(1-&gt;2)-alpha-D-Man-(1-&gt;3)-[beta-D-Gal-(1-&gt;4)-beta-D-GlcNAc-(1-&gt;2)-alpha-D-Man-(1-&gt;6)]-beta-D-Man-(1-&gt;4)-beta-D-GlcNAc-(1-&gt;4)-beta-D-GlcNAc}-L-asparaginyl-[protein] + UDP-N-acetyl-alpha-D-glucosamine = an N(4)-{beta-D-GlcNAc-(1-&gt;2)-[beta-D-GlcNAc-(1-&gt;4)]-alpha-D-Man-(1-&gt;3)-[beta-D-Gal-(1-&gt;4)-beta-D-GlcNAc-(1-&gt;2)-alpha-D-Man-(1-&gt;6)]-beta-D-Man-(1-&gt;4)-beta-D-GlcNAc-(1-&gt;4)-beta-D-GlcNAc}-L-asparaginyl-[protein] + UDP + H(+). It carries out the reaction N(4)-{beta-D-GlcNAc-(1-&gt;2)-alpha-D-Man-(1-&gt;3)-[alpha-D-Man-(1-&gt;3)-{alpha-D-Man-(1-&gt;6)}-alpha-D-Man-(1-&gt;6)]-beta-D-Man-(1-&gt;4)-beta-D-GlcNAc-(1-&gt;4)-beta-D-GlcNAc}-asparaginyl-[protein] + UDP-N-acetyl-alpha-D-glucosamine = N(4)-{beta-D-GlcNAc-(1-&gt;2)-[beta-D-GlcNAc-(1-&gt;4)]-alpha-D-Man-(1-&gt;3)-[alpha-D-Man-(1-&gt;3)-{alpha-D-Man-(1-&gt;6)}-alpha-D-Man-(1-&gt;6)]-beta-D-Man-(1-&gt;4)-beta-D-GlcNAc-(1-&gt;4)-beta-D-GlcNAc}-asparaginyl-[protein] + UDP + H(+). The catalysed reaction is N(4)-{beta-D-GlcNAc-(1-&gt;2)-alpha-D-Man-(1-&gt;3)-beta-D-Man-(1-&gt;4)-beta-D-GlcNAc-(1-&gt;4)-beta-D-GlcNAc}-asparaginyl-[protein] + UDP-N-acetyl-alpha-D-glucosamine = N(4)-{beta-D-GlcNAc-(1-&gt;2)-[beta-D-GlcNAc-(1-&gt;4)]-alpha-D-Man-(1-&gt;3)-beta-D-Man-(1-&gt;4)-beta-D-GlcNAc-(1-&gt;4)-beta-D-GlcNAc}-asparaginyl-[protein] + UDP + H(+). It participates in protein modification; protein glycosylation. Its activity is regulated as follows. Inhibited by UDP. Glycosyltransferase that catalyze the transfer of GlcNAc from UDP-GlcNAc to the GlcNAcbeta1-2Manalpha1-3 arm of the core structure of N-linked glycans through a beta1-4 linkage and participates in the production of tri- and tetra-antennary N-linked sugar chains. Involved in glucose transport by mediating SLC2A2/GLUT2 glycosylation, thereby controlling cell-surface expression of SLC2A2 in pancreatic beta cells. The sequence is that of Alpha-1,3-mannosyl-glycoprotein 4-beta-N-acetylglucosaminyltransferase A from Macaca fascicularis (Crab-eating macaque).